We begin with the raw amino-acid sequence, 291 residues long: MGGDNTLNDFRHIPRKRFGQHWLKDQGVLDQIVKAAELNPEDCVLEVGPGKGALTEKLIESQAKFIQAIELDRDLVIGLKKRFNHQNKFSLREGDILSAPLDAENGVTINKVVANIPYNITGPLLKRLIGELRKAPENSFETLVLLMQKEVAQRLLARPGNSNFSALSVRVQLLAKCQDVCDVPSKCFQPAPKVDSKVVMIKPFASIDPDFYEVGNLLEKLLKHAFAGRRKKLRNTIGSFVTSNDQIKEFFAYRGISLDQRPQEISPSNWFGLAKALKETCVIENGTFQSK.

His-21, Leu-23, Gly-48, Glu-70, Asp-95, and Asn-115 together coordinate S-adenosyl-L-methionine.

It belongs to the class I-like SAM-binding methyltransferase superfamily. rRNA adenine N(6)-methyltransferase family. RsmA subfamily.

It localises to the cytoplasm. The enzyme catalyses adenosine(1518)/adenosine(1519) in 16S rRNA + 4 S-adenosyl-L-methionine = N(6)-dimethyladenosine(1518)/N(6)-dimethyladenosine(1519) in 16S rRNA + 4 S-adenosyl-L-homocysteine + 4 H(+). Functionally, specifically dimethylates two adjacent adenosines (A1518 and A1519) in the loop of a conserved hairpin near the 3'-end of 16S rRNA in the 30S particle. May play a critical role in biogenesis of 30S subunits. This chain is Ribosomal RNA small subunit methyltransferase A, found in Prochlorococcus marinus (strain NATL1A).